Consider the following 461-residue polypeptide: Trimethylamine monooxygenase (461 aa).

FAD-binding residues include Ser-14, Glu-39, Lys-40, Gln-41, Met-47, Trp-48, and His-64. Residues Trp-72 and Asn-74 each coordinate NADP(+). Residues Asn-74 and Ala-127 each coordinate FAD. The NADP(+) site is built by Ser-206, Ser-207, Ser-209, Arg-230, and Thr-231. Residues Gln-319 and Thr-322 each coordinate FAD. An NADP(+)-binding site is contributed by Arg-413.

Belongs to the FMO family. FAD serves as cofactor.

The catalysed reaction is trimethylamine + NADPH + O2 = trimethylamine N-oxide + NADP(+) + H2O. In terms of biological role, catalyzes the oxidation of trimethylamine (TMA) to produce trimethylamine N-oxide (TMAO). The produced TMAO is accumulated in the cell, functioning as a piezolyte, improving both growth and survival at high hydrostatic pressure (HHP). The sequence is that of Trimethylamine monooxygenase from Myroides profundi.